Here is a 298-residue protein sequence, read N- to C-terminus: Probable mitochondrial 2-oxodicarboxylate carrier (298 aa).

Transmembrane regions (helical) follow at residues I6 to L26, H62 to L81, A105 to F125, A159 to F179, L203 to I223, and V267 to F287. Solcar repeat units follow at residues I6–L92, S102–S188, and G197–F287.

It belongs to the mitochondrial carrier (TC 2.A.29) family.

It is found in the mitochondrion inner membrane. Transports C5-C7 oxodicarboxylates across the inner membranes of mitochondria. In Schizosaccharomyces pombe (strain 972 / ATCC 24843) (Fission yeast), this protein is Probable mitochondrial 2-oxodicarboxylate carrier.